The following is an 836-amino-acid chain: Serine/threonine-protein kinase ppk5 (836 aa).

4 disordered regions span residues 1 to 29 (MVGLISTSETLPKQESKSSSAPVSNFLSP), 192 to 214 (INQLDETPGGTNYPMNKKKTLSS), 230 to 307 (CSQF…YKSI), and 328 to 381 (TPLD…ERQN). 3 stretches are compositionally biased toward polar residues: residues 192–205 (INQLDETPGGTNYP), 232–241 (QFASPRSSIV), and 265–288 (KPSNFNNNIQSSSYGHASQSTKLT). Residues 289–298 (SQRDNDHQKD) show a composition bias toward basic and acidic residues. The span at 338–347 (SGKKFNKNSK) shows a compositional bias: basic residues. Residues 353 to 362 (STISSYSSAS) are compositionally biased toward low complexity. Residues 518-814 (YEIIDTVGKG…VDSALQHEFI (297 aa)) form the Protein kinase domain. ATP is bound by residues 524-532 (VGKGSFGQV) and Lys-547. Asp-644 serves as the catalytic Proton acceptor. The residue at position 678 (Tyr-678) is a Phosphotyrosine.

This sequence belongs to the protein kinase superfamily. CMGC Ser/Thr protein kinase family. MNB/DYRK subfamily.

It is found in the cytoplasm. It carries out the reaction L-seryl-[protein] + ATP = O-phospho-L-seryl-[protein] + ADP + H(+). It catalyses the reaction L-threonyl-[protein] + ATP = O-phospho-L-threonyl-[protein] + ADP + H(+). In terms of biological role, has a role in meiosis. This chain is Serine/threonine-protein kinase ppk5 (ppk5), found in Schizosaccharomyces pombe (strain 972 / ATCC 24843) (Fission yeast).